The following is a 325-amino-acid chain: Lipoyl synthase (325 aa).

Positions 72, 77, 83, 98, 102, 105, and 312 each coordinate [4Fe-4S] cluster. Residues Phe84–Lys301 enclose the Radical SAM core domain.

Belongs to the radical SAM superfamily. Lipoyl synthase family. The cofactor is [4Fe-4S] cluster.

The protein localises to the cytoplasm. The catalysed reaction is [[Fe-S] cluster scaffold protein carrying a second [4Fe-4S](2+) cluster] + N(6)-octanoyl-L-lysyl-[protein] + 2 oxidized [2Fe-2S]-[ferredoxin] + 2 S-adenosyl-L-methionine + 4 H(+) = [[Fe-S] cluster scaffold protein] + N(6)-[(R)-dihydrolipoyl]-L-lysyl-[protein] + 4 Fe(3+) + 2 hydrogen sulfide + 2 5'-deoxyadenosine + 2 L-methionine + 2 reduced [2Fe-2S]-[ferredoxin]. The protein operates within protein modification; protein lipoylation via endogenous pathway; protein N(6)-(lipoyl)lysine from octanoyl-[acyl-carrier-protein]: step 2/2. Catalyzes the radical-mediated insertion of two sulfur atoms into the C-6 and C-8 positions of the octanoyl moiety bound to the lipoyl domains of lipoate-dependent enzymes, thereby converting the octanoylated domains into lipoylated derivatives. The polypeptide is Lipoyl synthase (Azotobacter vinelandii (strain DJ / ATCC BAA-1303)).